A 336-amino-acid polypeptide reads, in one-letter code: HTH-type transcriptional repressor PurR (336 aa).

Residues 2–56 (ATIKDVARLAGVSTTTVSHVINKTRFVAETTQEKVMEAVKQLNYAPSAVARSLKC) form the HTH lacI-type domain. The segment at residues 4–23 (IKDVARLAGVSTTTVSHVIN) is a DNA-binding region (H-T-H motif). The DNA-binding element occupies 48 to 56 (SAVARSLKC). 4 residues coordinate hypoxanthine: F73, K189, F220, and D274.

As to quaternary structure, homodimer.

It functions in the pathway purine metabolism; purine nucleotide biosynthesis [regulation]. In terms of biological role, is the main repressor of the genes involved in the de novo synthesis of purine nucleotides, regulating purB, purC, purEK, purF, purHD, purL, purMN and guaBA expression. PurR is allosterically activated to bind its cognate DNA by binding the purine corepressors, hypoxanthine or guanine, thereby effecting transcription repression. The chain is HTH-type transcriptional repressor PurR from Vibrio cholerae serotype O1 (strain ATCC 39315 / El Tor Inaba N16961).